The chain runs to 275 residues: Malonyl-[acyl-carrier protein] O-methyltransferase (275 aa).

Belongs to the methyltransferase superfamily.

It catalyses the reaction malonyl-[ACP] + S-adenosyl-L-methionine = malonyl-[ACP] methyl ester + S-adenosyl-L-homocysteine. It participates in cofactor biosynthesis; biotin biosynthesis. In terms of biological role, converts the free carboxyl group of a malonyl-thioester to its methyl ester by transfer of a methyl group from S-adenosyl-L-methionine (SAM). It allows to synthesize pimeloyl-ACP via the fatty acid synthetic pathway. This chain is Malonyl-[acyl-carrier protein] O-methyltransferase, found in Methylococcus capsulatus (strain ATCC 33009 / NCIMB 11132 / Bath).